Here is a 178-residue protein sequence, read N- to C-terminus: Zinc finger protein ZAT11 (178 aa).

C2H2-type zinc fingers lie at residues 47–69 and 94–116; these read FECKTCNKRFSSFQALGGHRASH and HKCSICSQSFGTGQALGGHMRRH.

In terms of tissue distribution, expressed in leaves.

Its subcellular location is the nucleus. Probable transcription factor that may be involved in stress responses. The protein is Zinc finger protein ZAT11 (ZAT11) of Arabidopsis thaliana (Mouse-ear cress).